We begin with the raw amino-acid sequence, 184 residues long: Bifunctional protein PyrR (184 aa).

The PRPP-binding signature appears at 99 to 111 (IVLVDDVLYTGRT).

The protein belongs to the purine/pyrimidine phosphoribosyltransferase family. PyrR subfamily. Homodimer and homohexamer; in equilibrium.

The catalysed reaction is UMP + diphosphate = 5-phospho-alpha-D-ribose 1-diphosphate + uracil. Regulates transcriptional attenuation of the pyrimidine nucleotide (pyr) operon by binding in a uridine-dependent manner to specific sites on pyr mRNA. This disrupts an antiterminator hairpin in the RNA and favors formation of a downstream transcription terminator, leading to a reduced expression of downstream genes. Its function is as follows. Also displays a weak uracil phosphoribosyltransferase activity which is not physiologically significant. The protein is Bifunctional protein PyrR of Acetivibrio thermocellus (strain ATCC 27405 / DSM 1237 / JCM 9322 / NBRC 103400 / NCIMB 10682 / NRRL B-4536 / VPI 7372) (Clostridium thermocellum).